The chain runs to 334 residues: Ribosomal RNA small subunit methyltransferase H (334 aa).

Residues 34–36, Asp52, Ala87, Asp100, and Gln107 contribute to the S-adenosyl-L-methionine site; that span reads GGY.

The protein belongs to the methyltransferase superfamily. RsmH family.

The protein resides in the cytoplasm. The enzyme catalyses cytidine(1402) in 16S rRNA + S-adenosyl-L-methionine = N(4)-methylcytidine(1402) in 16S rRNA + S-adenosyl-L-homocysteine + H(+). Its function is as follows. Specifically methylates the N4 position of cytidine in position 1402 (C1402) of 16S rRNA. The chain is Ribosomal RNA small subunit methyltransferase H from Maricaulis maris (strain MCS10) (Caulobacter maris).